The primary structure comprises 577 residues: Moesin (577 aa).

The FERM domain occupies 2 to 295 (PKTISVRVTT…GNHELYMRRR (294 aa)). Ser74 is subject to Phosphoserine. Residue Lys79 is modified to N6-acetyllysine. An N6-succinyllysine modification is found at Lys83. A [IL]-x-C-x-x-[DE] motif motif is present at residues 115-120 (IYCPPE). A Phosphotyrosine modification is found at Tyr116. An S-nitrosocysteine modification is found at Cys117. 2 positions are modified to N6-acetyllysine: Lys139 and Lys165. Disordered regions lie at residues 322–342 (LLEN…KIER), 358–453 (TKKA…QMVQ), and 468–549 (STPH…AENM). Residues 358–401 (TKKAQQELEEQTRRALELEQERKRAQSEAEKLAKERQEAEEAKE) show a composition bias toward basic and acidic residues. Ser407 is modified (phosphoserine). Composition is skewed to basic and acidic residues over residues 438-447 (KESEAEECHQ) and 492-519 (AELR…ERVQ). Position 527 is a phosphoserine (Ser527). Over residues 531 to 549 (NARDESKKTTNDMIHAENM) the composition is skewed to basic and acidic residues. Phosphothreonine; by ROCK2 and STK10 is present on Thr558.

In terms of assembly, in resting T-cells, part of a PAG1-NHERF1-MSN complex which is disrupted upon TCR activation. Interacts with NHERF1. Interacts with PPP1R16B. Interacts with PDZD8. Interacts with SELPLG and SYK; these interactions mediate the activation of SYK by SELPLG. Interacts with PDPN (via cytoplasmic domain); this interaction activates RHOA and promotes epithelial-mesenchymal transition. Interacts with SPN/CD43 cytoplasmic tail. Interacts with CD44. Interacts with ICAM2. Interacts with ICAM3 (via C-terminus). Interacts with PDZD8. Interacts with F-actin. Interacts with CD46. Interacts with PTPN6. Phosphorylation on Thr-558 is crucial for the formation of microvilli-like structures. Phosphorylation by ROCK2 suppresses the head-to-tail association of the N-terminal and C-terminal halves resulting in an opened conformation which is capable of actin and membrane-binding. Phosphorylation on Thr-558 by STK10 negatively regulates lymphocyte migration and polarization. In terms of processing, S-nitrosylation of Cys-117 is induced by interferon-gamma and oxidatively-modified low-densitity lipoprotein (LDL(ox)) implicating the iNOS-S100A8/9 transnitrosylase complex.

It is found in the cell membrane. Its subcellular location is the cytoplasm. The protein localises to the cytoskeleton. The protein resides in the apical cell membrane. It localises to the cell projection. It is found in the microvillus membrane. Its subcellular location is the microvillus. A head-to-tail association, of the N-terminal and C-terminal halves results in a closed conformation (inactive form) which is incapable of actin or membrane-binding. Functionally, ezrin-radixin-moesin (ERM) family protein that connects the actin cytoskeleton to the plasma membrane and thereby regulates the structure and function of specific domains of the cell cortex. Tethers actin filaments by oscillating between a resting and an activated state providing transient interactions between moesin and the actin cytoskeleton. Once phosphorylated on its C-terminal threonine, moesin is activated leading to interaction with F-actin and cytoskeletal rearrangement. These rearrangements regulate many cellular processes, including cell shape determination, membrane transport, and signal transduction. The role of moesin is particularly important in immunity acting on both T and B-cells homeostasis and self-tolerance, regulating lymphocyte egress from lymphoid organs. Modulates phagolysosomal biogenesis in macrophages. Participates also in immunologic synapse formation. This chain is Moesin, found in Rattus norvegicus (Rat).